A 147-amino-acid polypeptide reads, in one-letter code: Hemoglobin subunit gamma-2 (147 aa).

The region spanning 3–147 is the Globin domain; sequence HFTEEDKATI…VASALSSRYH (145 aa). Position 13 is a phosphothreonine (T13). Phosphoserine occurs at positions 45, 51, and 53. K60 is modified (N6-acetyllysine). Residue H64 coordinates heme b. The residue at position 83 (K83) is an N6-acetyllysine. H93 lines the heme b pocket. The residue at position 94 (C94) is an S-nitrosocysteine. S140, S143, and S144 each carry phosphoserine.

Belongs to the globin family. In terms of assembly, heterotetramer of two alpha chains and two gamma chains in fetal hemoglobin (Hb F). As to expression, red blood cells.

Its function is as follows. Gamma chains make up the fetal hemoglobin F, in combination with alpha chains. In Gorilla gorilla gorilla (Western lowland gorilla), this protein is Hemoglobin subunit gamma-2 (HBG2).